Consider the following 1066-residue polypeptide: Vinculin (1066 aa).

Positions 1–835 are N-terminal globular head; the sequence is MPVFHTRTIE…GAVAKVREAF (835 aa). Serine 97 is modified (phosphoserine). A talin-interaction region spans residues 168-208; it reads MTKMAKMIDERQQELTHQEHRVMLVNSMNTVKELLPVLISA. Position 173 is an N6-acetyllysine (lysine 173). 3 repeat units span residues 259–369, 370–479, and 480–589. The 3 X 112 AA tandem repeats stretch occupies residues 259-589; that stretch reads ASKDTEAMKR…LKDLKAQMQE (331 aa). Phosphoserine occurs at positions 260, 272, 275, 290, 346, and 434. Lysine 496 is subject to N6-acetyllysine. Tyrosine 537 carries the phosphotyrosine modification. Residues serine 574, serine 579, and serine 600 each carry the phosphoserine modification. 2 positions are modified to phosphothreonine: threonine 604 and threonine 672. Serine 721 is modified (phosphoserine). The interval 741–764 is interaction with ACTN4; that stretch reads MANIQPQMLVAGATSIARRANRIL. A phosphoserine mark is found at serine 795 and serine 809. At tyrosine 822 the chain carries Phosphotyrosine. The interval 836 to 878 is linker (Pro-rich); it reads QPQEPDFPPPPPDLEQLRLTDELAPPKPPLPEGEVPPPRPPPP. Positions 857–887 are disordered; the sequence is ELAPPKPPLPEGEVPPPRPPPPEEKDEEFPE. The segment covering 860–876 has biased composition (pro residues); it reads PPKPPLPEGEVPPPRPP. Positions 879-1066 are C-terminal tail; sequence EEKDEEFPEQ…RWVRKTPWYQ (188 aa). Facilitates phospholipid membrane insertion regions lie at residues 935-978 and 1052-1066; these read RLVR…KRIR and AGFT…PWYQ. A Phosphotyrosine; by SRC-type Tyr-kinases modification is found at tyrosine 1065.

Belongs to the vinculin/alpha-catenin family. As to quaternary structure, exhibits self-association properties. Part of a complex composed of THSD1, PTK2/FAK1, TLN1 and VCL. Interacts with APBB1IP, NRAP and TLN1. Interacts with SYNM. Interacts with CTNNB1 and this interaction is necessary for its localization to the cell-cell junctions and for its function in regulating cell surface expression of E-cadherin. Interacts with SORBS1. Interacts with SYNM. Interacts with CTNNA1. Binds to ACTN4; this interaction triggers conformational changes. Interacts with FLII. Post-translationally, phosphorylated; on serines, threonines and tyrosines. Phosphorylation on Tyr-1065 in activated platelets affects head-tail interactions and cell spreading but has no effect on actin binding nor on localization to focal adhesion plaques. In terms of processing, acetylated; mainly by myristic acid but also by a small amount of palmitic acid.

It localises to the cell membrane. Its subcellular location is the cell junction. The protein localises to the adherens junction. The protein resides in the focal adhesion. It is found in the cytoplasm. It localises to the cytoskeleton. Its subcellular location is the sarcolemma. The protein localises to the cell projection. The protein resides in the podosome. Its function is as follows. Actin filament (F-actin)-binding protein involved in cell-matrix adhesion and cell-cell adhesion. Regulates cell-surface E-cadherin expression and potentiates mechanosensing by the E-cadherin complex. May also play important roles in cell morphology and locomotion. This chain is Vinculin (Vcl), found in Mus musculus (Mouse).